The primary structure comprises 154 residues: Large ribosomal subunit protein uL15 (154 aa).

Basic and acidic residues predominate over residues 1–13 (MKLHELKPAEGSR). The interval 1 to 52 (MKLHELKPAEGSRKNRKRVGRGPGGTDKTAGRGHKGQKSRSGAGKGSFFEGG) is disordered.

It belongs to the universal ribosomal protein uL15 family. Part of the 50S ribosomal subunit.

Its function is as follows. Binds to the 23S rRNA. The polypeptide is Large ribosomal subunit protein uL15 (Deinococcus deserti (strain DSM 17065 / CIP 109153 / LMG 22923 / VCD115)).